Reading from the N-terminus, the 166-residue chain is Ribosome maturation factor RimP (166 aa).

Belongs to the RimP family.

The protein localises to the cytoplasm. Functionally, required for maturation of 30S ribosomal subunits. The chain is Ribosome maturation factor RimP from Psychrobacter cryohalolentis (strain ATCC BAA-1226 / DSM 17306 / VKM B-2378 / K5).